We begin with the raw amino-acid sequence, 199 residues long: Recombination protein RecR (199 aa).

The C4-type zinc finger occupies 58–73 (CRICYNITDTEVCNIC). Residues 81–176 (SLICVVSHPM…KVTRIAHGVP (96 aa)) enclose the Toprim domain.

The protein belongs to the RecR family.

In terms of biological role, may play a role in DNA repair. It seems to be involved in an RecBC-independent recombinational process of DNA repair. It may act with RecF and RecO. The chain is Recombination protein RecR from Thermoanaerobacter sp. (strain X514).